The sequence spans 407 residues: MYLEYLQPKLNLMDESSTISKNFPDYSPNLNTPITSNFNEETGSDCSLVTPRIISSSNSNSNSNSNSNSNSNSGSIDENELNNSNSSSSSARQIRKKWKEPEDIAFITTIMNNSQLLTFVEYFKPMKNFWKKISKILFQQYGYERNSRQCHDRFKVLYTKSLKVHPSKKSKQKKKKSKQEAGSNLNFDPSKLSRMQYLLVQLQNTFSFVNGNIILKSQKTLKPNKNGTNDNINNHYYNNCNNNNNNINNSNNSNNNNSNNINRNSNHSTNVFSTPEHIQSSINLDKLESLPALDTKGEPSFISPAQFSLLSSAPADNLILQTPPSPFFQQTMPIQLPRDAQQEQISPVFSTDVIYMWQTMFNTIENLKEQVNCLKNEVKQLNHKFYQQNKPLHNMSTSDSENFMQQH.

3 disordered regions span residues 51–94 (PRII…ARQI), 165–187 (HPSK…NLNF), and 241–273 (NNNN…NVFS). The span at 55 to 73 (SSSNSNSNSNSNSNSNSNS) shows a compositional bias: low complexity. A Myb-like domain is found at 90–158 (SARQIRKKWK…QCHDRFKVLY (69 aa)). Residues 165–177 (HPSKKSKQKKKKS) are compositionally biased toward basic residues. Low complexity predominate over residues 241–270 (NNNNNNINNSNNSNNNNSNNINRNSNHSTN).

The protein resides in the nucleus. In terms of biological role, negative regulator of the Ras-cyclic AMP pathway. Negatively regulate the activity of normal but not mutationally activated Ras proteins. The down-regulatory effect of RPI1 requires the presence of one of the two Ras GTPase activators, IRA1 and IRA2. The polypeptide is Negative RAS protein regulator protein (RPI1) (Saccharomyces cerevisiae (strain ATCC 204508 / S288c) (Baker's yeast)).